A 319-amino-acid polypeptide reads, in one-letter code: Glutathione synthetase (319 aa).

Residues 125 to 311 form the ATP-grasp domain; it reads KLFTAWFPEL…ITGMLMDAIE (187 aa). 151–207 contributes to the ATP binding site; that stretch reads HQEHGDIILKPLDGMGGTSIFRVKQDDPNLSVIIETLTELSSRFCMAQNFLPAIKEG. Positions 281 and 283 each coordinate Mg(2+).

Belongs to the prokaryotic GSH synthase family. The cofactor is Mg(2+). Requires Mn(2+) as cofactor.

It carries out the reaction gamma-L-glutamyl-L-cysteine + glycine + ATP = glutathione + ADP + phosphate + H(+). It participates in sulfur metabolism; glutathione biosynthesis; glutathione from L-cysteine and L-glutamate: step 2/2. The protein is Glutathione synthetase of Yersinia pestis.